A 117-amino-acid polypeptide reads, in one-letter code: Probable non-functional immunoglobulin heavy variable 1-38-4 (117 aa).

The N-terminal stretch at 1-19 (MDWNWRILFLVVATTGAHS) is a signal peptide. Residues 20–44 (QVQLVQSWAEVRKSGASVKVSCSFS) are framework-1. The Ig-like domain maps to 20 to 117 (QVQLVQSWAE…EDMAVYYYAR (98 aa)). Residues 45-52 (GFTITSYG) form a complementarity-determining-1 region. Residues 53–69 (IHWVQQSPGQGLEWMGW) are framework-2. The interval 70 to 77 (INPGNGSP) is complementarity-determining-2. The N-linked (GlcNAc...) asparagine glycan is linked to N74. The framework-3 stretch occupies residues 78-115 (SYAKKFQGRFTMTRDMSTTTAYTDLSSLTSEDMAVYYY). The segment at 116–117 (AR) is complementarity-determining-3.

In terms of assembly, most probably, the immunoglobulin is not assembled due to incorrect folding of heavy chain. Immunoglobulins are composed of two identical heavy chains and two identical light chains; disulfide-linked.

Its subcellular location is the secreted. It is found in the cell membrane. In terms of biological role, probable non-functional open reading frame (ORF) of V region of the variable domain of immunoglobulin heavy chains. Non-functional ORF generally cannot participate in the synthesis of a productive immunoglobulin chain due to altered V-(D)-J or switch recombination and/or splicing site (at mRNA level) and/or conserved amino acid change (protein level). Immunoglobulins, also known as antibodies, are membrane-bound or secreted glycoproteins produced by B lymphocytes. In the recognition phase of humoral immunity, the membrane-bound immunoglobulins serve as receptors which, upon binding of a specific antigen, trigger the clonal expansion and differentiation of B lymphocytes into immunoglobulins-secreting plasma cells. Secreted immunoglobulins mediate the effector phase of humoral immunity, which results in the elimination of bound antigens. The antigen binding site is formed by the variable domain of one heavy chain, together with that of its associated light chain. Thus, each immunoglobulin has two antigen binding sites with remarkable affinity for a particular antigen. The variable domains are assembled by a process called V-(D)-J rearrangement and can then be subjected to somatic hypermutations which, after exposure to antigen and selection, allow affinity maturation for a particular antigen. This chain is Probable non-functional immunoglobulin heavy variable 1-38-4, found in Homo sapiens (Human).